Reading from the N-terminus, the 296-residue chain is 4-hydroxybenzoate octaprenyltransferase (296 aa).

8 consecutive transmembrane segments (helical) span residues 22–42, 46–66, 99–121, 139–159, 163–183, 211–231, 238–258, and 270–290; these read PIGILLLLWPTLWALWLSALG, WIVVWIFILGTVLMRSAGCVI, LFAGLSLLSFLLVVFLGNTLVIW, FFAIPQAYLGVAFGFGIPMAY, LGEVPAEAWWLLLANVFWAVA, FDVAAVMLCYGVTLAIIGGIG, PAFYAGLAVATCIMGVHYTWI, and FLHNNWVGLSIFVGIVVDFLV.

This sequence belongs to the UbiA prenyltransferase family. The cofactor is Mg(2+).

It localises to the cell inner membrane. It catalyses the reaction all-trans-octaprenyl diphosphate + 4-hydroxybenzoate = 4-hydroxy-3-(all-trans-octaprenyl)benzoate + diphosphate. Its pathway is cofactor biosynthesis; ubiquinone biosynthesis. Its function is as follows. Catalyzes the prenylation of para-hydroxybenzoate (PHB) with an all-trans polyprenyl group. Mediates the second step in the final reaction sequence of ubiquinone-8 (UQ-8) biosynthesis, which is the condensation of the polyisoprenoid side chain with PHB, generating the first membrane-bound Q intermediate 3-octaprenyl-4-hydroxybenzoate. The chain is 4-hydroxybenzoate octaprenyltransferase from Dechloromonas aromatica (strain RCB).